Consider the following 37-residue polypeptide: Large ribosomal subunit protein bL36c (37 aa).

Belongs to the bacterial ribosomal protein bL36 family.

It is found in the plastid. It localises to the chloroplast. This is Large ribosomal subunit protein bL36c from Acorus calamus (Sweet flag).